A 632-amino-acid chain; its full sequence is Threonine--tRNA ligase (632 aa).

Positions methionine 1 to threonine 61 constitute a TGS domain. The segment at aspartate 242–proline 533 is catalytic. 3 residues coordinate Zn(2+): cysteine 333, histidine 384, and histidine 510.

The protein belongs to the class-II aminoacyl-tRNA synthetase family. Homodimer. It depends on Zn(2+) as a cofactor.

The protein resides in the cytoplasm. The catalysed reaction is tRNA(Thr) + L-threonine + ATP = L-threonyl-tRNA(Thr) + AMP + diphosphate + H(+). Functionally, catalyzes the attachment of threonine to tRNA(Thr) in a two-step reaction: L-threonine is first activated by ATP to form Thr-AMP and then transferred to the acceptor end of tRNA(Thr). Also edits incorrectly charged L-seryl-tRNA(Thr). This chain is Threonine--tRNA ligase, found in Ruthia magnifica subsp. Calyptogena magnifica.